The following is a 301-amino-acid chain: HTH-type transcriptional activator NagR (301 aa).

In terms of domain architecture, HTH lysR-type spans 6–63 (IDLNLLVVFNQLLLDRSVSTAGEKLGLTQPAVSNSLKRLRAALKDDLFLRTSKGMEPT). The H-T-H motif DNA-binding region spans 23–42 (VSTAGEKLGLTQPAVSNSLK).

The protein belongs to the LysR transcriptional regulatory family.

May regulate the expression of the naphthalene (nagA-F) and salicylate (nagG-M) metabolism genes. The polypeptide is HTH-type transcriptional activator NagR (Ralstonia sp).